The primary structure comprises 109 residues: Small ribosomal subunit protein bS16 (109 aa).

The segment at 87 to 109 (ALRETPKKSAPKAKAQERAKAAG) is disordered. Residues 100–109 (KAQERAKAAG) show a composition bias toward basic and acidic residues.

The protein belongs to the bacterial ribosomal protein bS16 family.

The sequence is that of Small ribosomal subunit protein bS16 from Rhodospirillum centenum (strain ATCC 51521 / SW).